We begin with the raw amino-acid sequence, 405 residues long: Argininosuccinate synthase (405 aa).

Residues 10–18 and Ala37 each bind ATP; that span reads AYSGGLDTS. Residues Tyr88 and Ser93 each contribute to the L-citrulline site. Gly118 contacts ATP. Residues Thr120, Asn124, and Asp125 each coordinate L-aspartate. Asn124 lines the L-citrulline pocket. Residues Arg128, Ser179, Ser188, Glu264, and Tyr276 each coordinate L-citrulline.

It belongs to the argininosuccinate synthase family. Type 1 subfamily. As to quaternary structure, homotetramer.

It is found in the cytoplasm. The enzyme catalyses L-citrulline + L-aspartate + ATP = 2-(N(omega)-L-arginino)succinate + AMP + diphosphate + H(+). It functions in the pathway amino-acid biosynthesis; L-arginine biosynthesis; L-arginine from L-ornithine and carbamoyl phosphate: step 2/3. The chain is Argininosuccinate synthase from Pseudomonas putida (strain GB-1).